The sequence spans 512 residues: Serine/threonine-protein kinase grp (512 aa).

Residues 22–279 (WTLAQTLGEG…LEKTLDHKWC (258 aa)) form the Protein kinase domain. ATP-binding positions include 28-36 (LGEGAYGEV) and Lys51. Asp143 serves as the catalytic Proton acceptor. Positions 335–360 (PTMRSDDDFNVRLGSGRSKEDGGDRQ) are disordered.

Belongs to the protein kinase superfamily. CAMK Ser/Thr protein kinase family. NIM1 subfamily. In terms of processing, phosphorylated in a MEI-41/ATR dependent manner in response to DNA damage or the presence of unreplicated DNA.

Its subcellular location is the nucleus. It catalyses the reaction L-seryl-[protein] + ATP = O-phospho-L-seryl-[protein] + ADP + H(+). The catalysed reaction is L-threonyl-[protein] + ATP = O-phospho-L-threonyl-[protein] + ADP + H(+). In terms of biological role, serine/threonine-protein kinase which is required for checkpoint-mediated cell cycle arrest and activation of DNA repair in response to the presence of DNA damage or unreplicated DNA. May also negatively regulate cell cycle progression during unperturbed cell cycles. May phosphorylate the CDC25 phosphatase stg, which promotes its degradation. This results in increased inhibitory tyrosine phosphorylation of Cdk1-cyclin complexes and consequent inhibition of cell cycle progression. The polypeptide is Serine/threonine-protein kinase grp (Drosophila melanogaster (Fruit fly)).